A 430-amino-acid polypeptide reads, in one-letter code: Transcobalamin-2 (430 aa).

Positions 1 to 18 (MELLKALLLLSGVFGALA) are cleaved as a signal peptide. 3 disulfides stabilise this stretch: cysteine 21–cysteine 270, cysteine 116–cysteine 312, and cysteine 165–cysteine 208. Cob(II)alamin-binding positions include 152–156 (TNYYQ), histidine 193, 193–197 (HVSVD), asparagine 245, serine 248, glutamine 294, and 398–400 (WQL).

It belongs to the eukaryotic cobalamin transport proteins family. Interacts with CD320 (via LDL-receptor class A domains).

Its subcellular location is the secreted. Its function is as follows. Primary vitamin B12-binding and transport protein. Delivers cobalamin to cells. The sequence is that of Transcobalamin-2 (Tcn2) from Mus musculus (Mouse).